A 303-amino-acid chain; its full sequence is D-alanine--D-alanine ligase (303 aa).

The region spanning R102 to R298 is the ATP-grasp domain. P128–T181 contributes to the ATP binding site. Mg(2+) is bound by residues D251, E265, and N267.

Belongs to the D-alanine--D-alanine ligase family. Mg(2+) is required as a cofactor. It depends on Mn(2+) as a cofactor.

It localises to the cytoplasm. The enzyme catalyses 2 D-alanine + ATP = D-alanyl-D-alanine + ADP + phosphate + H(+). It participates in cell wall biogenesis; peptidoglycan biosynthesis. Functionally, cell wall formation. This chain is D-alanine--D-alanine ligase, found in Gluconobacter oxydans (strain 621H) (Gluconobacter suboxydans).